Reading from the N-terminus, the 372-residue chain is Maltose/maltodextrin import ATP-binding protein MalK (372 aa).

Positions 4–234 (VSLRNVGKSY…PANRFVAGFI (231 aa)) constitute an ABC transporter domain. Residue 36-43 (GPSGCGKS) participates in ATP binding.

It belongs to the ABC transporter superfamily. Maltooligosaccharide importer (TC 3.A.1.1.1) family. In terms of assembly, the complex is composed of two ATP-binding proteins (MalK), two transmembrane proteins (MalG and MalK) and a solute-binding protein (MalE).

It is found in the cell inner membrane. The catalysed reaction is D-maltose(out) + ATP + H2O = D-maltose(in) + ADP + phosphate + H(+). In terms of biological role, part of the ABC transporter complex MalEFGK involved in maltose/maltodextrin import. Responsible for energy coupling to the transport system. This is Maltose/maltodextrin import ATP-binding protein MalK from Mannheimia succiniciproducens (strain KCTC 0769BP / MBEL55E).